Reading from the N-terminus, the 316-residue chain is Glutathione synthetase (316 aa).

The ATP-grasp domain maps to 123-309; it reads NEKISTLSFK…ISGILLDSIE (187 aa). 149–206 is an ATP binding site; the sequence is FQEKFGDIILKPINKMGGDSVFYVKKNDPNVSVIIDQLTNYGNSFCLIQEYIKEILNG. Mg(2+) contacts are provided by Glu280 and Asn282.

It belongs to the prokaryotic GSH synthase family. It depends on Mg(2+) as a cofactor. Requires Mn(2+) as cofactor.

It carries out the reaction gamma-L-glutamyl-L-cysteine + glycine + ATP = glutathione + ADP + phosphate + H(+). It functions in the pathway sulfur metabolism; glutathione biosynthesis; glutathione from L-cysteine and L-glutamate: step 2/2. The sequence is that of Glutathione synthetase from Wigglesworthia glossinidia brevipalpis.